The following is a 424-amino-acid chain: GTPase Obg (424 aa).

An Obg domain is found at 1–158; sequence MFIDTAKIFV…RWIKLELKLL (158 aa). An OBG-type G domain is found at 159-331; that stretch reads ADVGLIGFPN…LMKEAARLLS (173 aa). GTP-binding positions include 165–172, 190–194, 212–215, 282–285, and 312–314; these read GFPNVGKS, FTTLK, DIPG, NKSD, and SAA. 2 residues coordinate Mg(2+): S172 and T192. The OCT domain occupies 345 to 424; it reads RFIEEEKRFT…LNDFEFDFLL (80 aa).

It belongs to the TRAFAC class OBG-HflX-like GTPase superfamily. OBG GTPase family. In terms of assembly, monomer. Mg(2+) serves as cofactor.

It is found in the cytoplasm. Functionally, an essential GTPase which binds GTP, GDP and possibly (p)ppGpp with moderate affinity, with high nucleotide exchange rates and a fairly low GTP hydrolysis rate. Plays a role in control of the cell cycle, stress response, ribosome biogenesis and in those bacteria that undergo differentiation, in morphogenesis control. The protein is GTPase Obg of Clostridium botulinum (strain Langeland / NCTC 10281 / Type F).